Reading from the N-terminus, the 420-residue chain is Transcription termination factor Rho (420 aa).

In terms of domain architecture, Rho RNA-BD spans 49–124 (DIFGGGVLEI…LKVDQVNDDK (76 aa)). Residues 170–175 (GKGQRG), 182–187 (KAGKTM), and R213 each bind ATP.

This sequence belongs to the Rho family. As to quaternary structure, homohexamer. The homohexamer assembles into an open ring structure.

Functionally, facilitates transcription termination by a mechanism that involves Rho binding to the nascent RNA, activation of Rho's RNA-dependent ATPase activity, and release of the mRNA from the DNA template. In Haemophilus influenzae (strain ATCC 51907 / DSM 11121 / KW20 / Rd), this protein is Transcription termination factor Rho.